The following is a 320-amino-acid chain: Acetyl-coenzyme A carboxylase carboxyl transferase subunit alpha (320 aa).

In terms of domain architecture, CoA carboxyltransferase C-terminal spans 33 to 294 (AFDTEIQALR…GDAVEDELKA (262 aa)).

This sequence belongs to the AccA family. As to quaternary structure, acetyl-CoA carboxylase is a heterohexamer composed of biotin carboxyl carrier protein (AccB), biotin carboxylase (AccC) and two subunits each of ACCase subunit alpha (AccA) and ACCase subunit beta (AccD).

The protein localises to the cytoplasm. The enzyme catalyses N(6)-carboxybiotinyl-L-lysyl-[protein] + acetyl-CoA = N(6)-biotinyl-L-lysyl-[protein] + malonyl-CoA. It participates in lipid metabolism; malonyl-CoA biosynthesis; malonyl-CoA from acetyl-CoA: step 1/1. In terms of biological role, component of the acetyl coenzyme A carboxylase (ACC) complex. First, biotin carboxylase catalyzes the carboxylation of biotin on its carrier protein (BCCP) and then the CO(2) group is transferred by the carboxyltransferase to acetyl-CoA to form malonyl-CoA. This is Acetyl-coenzyme A carboxylase carboxyl transferase subunit alpha from Caulobacter vibrioides (strain ATCC 19089 / CIP 103742 / CB 15) (Caulobacter crescentus).